The primary structure comprises 207 residues: Prolactin (207 aa).

An N-terminal signal peptide occupies residues 1–20; sequence KSRLYFAVTVLMCAFVSING. 2 cysteine pairs are disulfide-bonded: cysteine 66–cysteine 180 and cysteine 197–cysteine 207.

The protein belongs to the somatotropin/prolactin family. As to expression, pituitary gland.

The protein resides in the secreted. The chain is Prolactin (prl) from Hypophthalmichthys molitrix (Silver carp).